The chain runs to 150 residues: Ribonuclease K6 (150 aa).

An N-terminal signal peptide occupies residues 1 to 23 (MVLCFPLLLLLLVLWGPVCPLHA). His-38 acts as the Proton acceptor in catalysis. 4 disulfide bridges follow: Cys-46-Cys-104, Cys-60-Cys-114, Cys-78-Cys-129, and Cys-85-Cys-92. The N-linked (GlcNAc...) asparagine glycan is linked to Asn-55. Substrate contacts are provided by residues 61–65 (KHQNT) and Lys-86. A glycan (N-linked (GlcNAc...) asparagine) is linked at Asn-100. Substrate is bound at residue Arg-105. His-145 serves as the catalytic Proton donor.

The protein belongs to the pancreatic ribonuclease family. As to quaternary structure, interacts (via N-terminus) with bacterial lipopolysaccharide (LPS).

It is found in the secreted. It localises to the lysosome. The protein resides in the cytoplasmic granule. Ribonuclease which shows a preference for the pyrimidines uridine and cytosine. Has potent antibacterial activity against a range of Gram-positive and Gram-negative bacteria, including P.aeruginosa, A.baumanii, M.luteus, S.aureus, E.faecalis, E.faecium, S.saprophyticus and E.coli. Causes loss of bacterial membrane integrity, and also promotes agglutination of Gram-negative bacteria. Probably contributes to urinary tract sterility. Bactericidal activity is independent of RNase activity. This Pongo pygmaeus (Bornean orangutan) protein is Ribonuclease K6 (RNASE6).